Here is a 1207-residue protein sequence, read N- to C-terminus: DNA-directed RNA polymerase subunit beta' (1207 aa).

Zn(2+) is bound by residues Cys60, Cys62, Cys75, and Cys78. Asp450, Asp452, and Asp454 together coordinate Mg(2+). Zn(2+)-binding residues include Cys819, Cys893, Cys900, and Cys903.

Belongs to the RNA polymerase beta' chain family. The RNAP catalytic core consists of 2 alpha, 1 beta, 1 beta' and 1 omega subunit. When a sigma factor is associated with the core the holoenzyme is formed, which can initiate transcription. It depends on Mg(2+) as a cofactor. Requires Zn(2+) as cofactor.

The enzyme catalyses RNA(n) + a ribonucleoside 5'-triphosphate = RNA(n+1) + diphosphate. In terms of biological role, DNA-dependent RNA polymerase catalyzes the transcription of DNA into RNA using the four ribonucleoside triphosphates as substrates. This Streptococcus pyogenes serotype M12 (strain MGAS2096) protein is DNA-directed RNA polymerase subunit beta'.